Reading from the N-terminus, the 207-residue chain is Large ribosomal subunit protein uL4 (207 aa).

The protein belongs to the universal ribosomal protein uL4 family. Part of the 50S ribosomal subunit.

Functionally, one of the primary rRNA binding proteins, this protein initially binds near the 5'-end of the 23S rRNA. It is important during the early stages of 50S assembly. It makes multiple contacts with different domains of the 23S rRNA in the assembled 50S subunit and ribosome. Forms part of the polypeptide exit tunnel. This is Large ribosomal subunit protein uL4 from Rickettsia peacockii (strain Rustic).